We begin with the raw amino-acid sequence, 320 residues long: o-succinylbenzoate synthase (320 aa).

Lysine 133 acts as the Proton donor in catalysis. Mg(2+) contacts are provided by aspartate 161, glutamate 190, and aspartate 213. Lysine 235 functions as the Proton acceptor in the catalytic mechanism.

The protein belongs to the mandelate racemase/muconate lactonizing enzyme family. MenC type 1 subfamily. Requires a divalent metal cation as cofactor.

The enzyme catalyses (1R,6R)-6-hydroxy-2-succinyl-cyclohexa-2,4-diene-1-carboxylate = 2-succinylbenzoate + H2O. It functions in the pathway quinol/quinone metabolism; 1,4-dihydroxy-2-naphthoate biosynthesis; 1,4-dihydroxy-2-naphthoate from chorismate: step 4/7. It participates in quinol/quinone metabolism; menaquinone biosynthesis. Converts 2-succinyl-6-hydroxy-2,4-cyclohexadiene-1-carboxylate (SHCHC) to 2-succinylbenzoate (OSB). The chain is o-succinylbenzoate synthase from Escherichia coli O17:K52:H18 (strain UMN026 / ExPEC).